A 563-amino-acid chain; its full sequence is Putative cytochrome c oxidase subunit 1-beta (563 aa).

The next 7 membrane-spanning stretches (helical) occupy residues 34 to 54 (IGHLYLITSFAFFLIGGVMAL), 76 to 96 (LFTLHGTIMLLLFATPTFAGF), 117 to 137 (MLSYWLFLFGGLIVLGSLAVP), 164 to 184 (MWIMGLALAGFGTILGSVNFL), 208 to 228 (LFTSILVLMAFPVLAAALLVL), 252 to 272 (LFWFFGHPEVYIIALPFFGII), and 284 to 304 (IFGYLTLIGATAAITGLSVVV). His-80 is a binding site for Fe(II)-heme a. The Cu cation site is built by His-258 and Tyr-262. Positions 258–262 (HPEVY) form a cross-link, 1'-histidyl-3'-tyrosine (His-Tyr). His-307 and His-308 together coordinate Cu cation. 2 consecutive transmembrane segments (helical) span residues 309 to 329 (MFATGAVLLPFFSFMSFLIAV) and 353 to 373 (MLWATGFLVSFLFGGLTGVIL). His-391 contributes to the heme a3 binding site. 3 helical membrane-spanning segments follow: residues 392-412 (FHYVVFGTVVFATFGGFYFWW), 427-447 (IHFWTLFVGFHTTFLVQHWLG), and 470-490 (LSTIGAFLLGMSTLPFLYNVW). His-393 is a binding site for Fe(II)-heme a. A disordered region spans residues 536-563 (AFDLHHPAHAGEAPQPEPKHEQADREPS). Residues 552–563 (EPKHEQADREPS) are compositionally biased toward basic and acidic residues.

This sequence belongs to the heme-copper respiratory oxidase family. As to quaternary structure, associates with subunits II, III and IV to form cytochrome c oxidase. Cu(2+) is required as a cofactor. It depends on heme as a cofactor.

It localises to the cell membrane. It carries out the reaction 4 Fe(II)-[cytochrome c] + O2 + 8 H(+)(in) = 4 Fe(III)-[cytochrome c] + 2 H2O + 4 H(+)(out). The protein operates within energy metabolism; oxidative phosphorylation. Functionally, cytochrome c oxidase is the component of the respiratory chain that catalyzes the reduction of oxygen to water. Subunits 1-3 form the functional core of the enzyme complex. CO I is the catalytic subunit of the enzyme. Electrons originating in cytochrome c are transferred via the copper A center of subunit 2 and heme A of subunit 1 to the bimetallic center formed by heme A3 and copper B. In Streptomyces avermitilis (strain ATCC 31267 / DSM 46492 / JCM 5070 / NBRC 14893 / NCIMB 12804 / NRRL 8165 / MA-4680), this protein is Putative cytochrome c oxidase subunit 1-beta (ctaD2).